The chain runs to 184 residues: Large ribosomal subunit protein uL6 (184 aa).

The protein belongs to the universal ribosomal protein uL6 family. As to quaternary structure, part of the 50S ribosomal subunit.

In terms of biological role, this protein binds to the 23S rRNA, and is important in its secondary structure. It is located near the subunit interface in the base of the L7/L12 stalk, and near the tRNA binding site of the peptidyltransferase center. In Mycoplasma genitalium (strain ATCC 33530 / DSM 19775 / NCTC 10195 / G37) (Mycoplasmoides genitalium), this protein is Large ribosomal subunit protein uL6.